A 571-amino-acid polypeptide reads, in one-letter code: MGNSPSYNPPAGISPSDWLNLLQSAQRLNPRPSPSDFTDLKNYIHWFHKTQKKPWTFTSGGPASCPPGKFGRVPLVLATLNEVLSNDEGAPGASAPEEQPPPYDPPAVLPIISEGNRNRHRAWALRELQDIKKEIENKAPGSQVWIQTLRLAILQADPTPADLEQLCQYIASPVDQTAHMTSLTAAIAAEAANTLQGFNPKMGTLTQQSAQPNAGDLRSQYQNLWLQAWKNLPTRPSVQPWSTIVQGPAESYVEFVNRLQISLADNLPDGVPKEPIIDSLSYANANKECQQILQGRGLVAAPVGQKLQACAHWAPKTKQPAILVHTPGPKMPGPRQPAPKRPPPGPCYRCLKEGHWARDCPTKTTGPPPGPCPICKDPSHWKRDCPTLKSKKLIEGGPSAPQIITPITDSLSEAELECLLSIPLARSRPSVAVYLSGPWLQPSQNQALMLVDTGAENTVLPQNWLVRDYPRTPAAVLGAGGISRNRYNWLQGPLTLALKPEGPFITIPKILVDTFDKWQILGRDVLSRLQASISIPEEVHPPVVGVLDAPPSHIGLEHLPPPPEVPQFPLN.

Glycine 2 is lipidated: N-myristoyl glycine; by host. The PPXY motif motif lies at 100 to 103 (PPPY). 2 consecutive repeats follow at residues 342–362 (PPPG…DCPT) and 367–387 (PPPG…DCPT). 2 CCHC-type zinc fingers span residues 345-362 (GPCY…DCPT) and 370-387 (GPCP…DCPT). Residues 447 to 525 (ALMLVDTGAE…DKWQILGRDV (79 aa)) form the Peptidase A2 domain. Aspartate 452 functions as the Protease; shared with dimeric partner in the catalytic mechanism.

As to quaternary structure, homodimer; the homodimers are part of the immature particles. Interacts with human TSG101 and NEDD4; these interactions are essential for budding and release of viral particles. Homodimer; further assembles as homohexamers. Post-translationally, specific enzymatic cleavages by the viral protease yield mature proteins. The polyprotein is cleaved during and after budding, this process is termed maturation. The protease is autoproteolytically processed at its N- and C-termini. Gag polyprotein: Myristoylated. Myristoylation of the matrix (MA) domain mediates the transport and binding of Gag polyproteins to the host plasma membrane and is required for the assembly of viral particles.

Its subcellular location is the virion. The matrix domain targets Gag, Gag-Pro and Gag-Pro-Pol polyproteins to the plasma membrane via a multipartite membrane binding signal, that includes its myristoylated N-terminus. Its function is as follows. Matrix protein. In terms of biological role, forms the spherical core of the virus that encapsulates the genomic RNA-nucleocapsid complex. Functionally, binds strongly to viral nucleic acids and promote their aggregation. Also destabilizes the nucleic acids duplexes via highly structured zinc-binding motifs. The aspartyl protease mediates proteolytic cleavages of Gag and Gag-Pol polyproteins during or shortly after the release of the virion from the plasma membrane. Cleavages take place as an ordered, step-wise cascade to yield mature proteins. This process is called maturation. Displays maximal activity during the budding process just prior to particle release from the cell. The chain is Gag-Pro polyprotein from Bos taurus (Bovine).